The chain runs to 273 residues: ATP synthase F(1) complex subunit gamma, mitochondrial (273 aa).

Lysine 14 carries the post-translational modification N6-acetyllysine. N6-succinyllysine is present on lysine 24. N6-acetyllysine is present on lysine 30. N6-acetyllysine; alternate is present on lysine 90. N6-succinyllysine; alternate is present on lysine 90. The residue at position 113 (lysine 113) is an N6-acetyllysine. Serine 121 is modified (phosphoserine). The residue at position 129 (lysine 129) is an N6-acetyllysine; alternate. Lysine 129 is subject to N6-succinyllysine; alternate. Lysine 172 bears the N6-acetyllysine mark. N6-succinyllysine is present on lysine 245.

It belongs to the ATPase gamma chain family. Component of the ATP synthase complex composed at least of ATP5F1A/subunit alpha, ATP5F1B/subunit beta, ATP5MC1/subunit c (homooctomer), MT-ATP6/subunit a, MT-ATP8/subunit 8, ATP5ME/subunit e, ATP5MF/subunit f, ATP5MG/subunit g, ATP5MK/subunit k, ATP5MJ/subunit j, ATP5F1C/subunit gamma, ATP5F1D/subunit delta, ATP5F1E/subunit epsilon, ATP5PF/subunit F6, ATP5PB/subunit b, ATP5PD/subunit d, ATP5PO/subunit OSCP. ATP synthase complex consists of a soluble F(1) head domain (subunits alpha(3) and beta(3)) - the catalytic core - and a membrane F(0) domain - the membrane proton channel (subunits c, a, 8, e, f, g, k and j). These two domains are linked by a central stalk (subunits gamma, delta, and epsilon) rotating inside the F1 region and a stationary peripheral stalk (subunits F6, b, d, and OSCP). Interacts with FLVCR2; this interaction occurs in the absence of heme and is disrupted upon heme binding.

It localises to the mitochondrion inner membrane. Its function is as follows. Subunit gamma, of the mitochondrial membrane ATP synthase complex (F(1)F(0) ATP synthase or Complex V) that produces ATP from ADP in the presence of a proton gradient across the membrane which is generated by electron transport complexes of the respiratory chain. ATP synthase complex consist of a soluble F(1) head domain - the catalytic core - and a membrane F(1) domain - the membrane proton channel. These two domains are linked by a central stalk rotating inside the F(1) region and a stationary peripheral stalk. During catalysis, ATP synthesis in the catalytic domain of F(1) is coupled via a rotary mechanism of the central stalk subunits to proton translocation. In vivo, can only synthesize ATP although its ATP hydrolase activity can be activated artificially in vitro. With the central stalk subunit delta, is essential for the biogenesis of F(1) catalytic part of the ATP synthase complex namely in the formation of F1 assembly intermediate. This is ATP synthase F(1) complex subunit gamma, mitochondrial from Rattus norvegicus (Rat).